A 199-amino-acid polypeptide reads, in one-letter code: LexA repressor (199 aa).

A DNA-binding region (H-T-H motif) is located at residues 28–47 (IRDIAKHFKLTPRGAHIHVI). Catalysis depends on for autocatalytic cleavage activity residues serine 120 and lysine 157.

It belongs to the peptidase S24 family. In terms of assembly, homodimer.

It catalyses the reaction Hydrolysis of Ala-|-Gly bond in repressor LexA.. Represses a number of genes involved in the response to DNA damage (SOS response), including recA and lexA. In the presence of single-stranded DNA, RecA interacts with LexA causing an autocatalytic cleavage which disrupts the DNA-binding part of LexA, leading to derepression of the SOS regulon and eventually DNA repair. The chain is LexA repressor from Thermosipho melanesiensis (strain DSM 12029 / CIP 104789 / BI429).